The following is a 199-amino-acid chain: Recombination protein RecR (199 aa).

The C4-type zinc-finger motif lies at 56 to 71; sequence CAICGNVSEKETCGIC. Residues 79 to 174 form the Toprim domain; that stretch reads ATICVVEEAK…RVTRLASGLP (96 aa).

The protein belongs to the RecR family.

May play a role in DNA repair. It seems to be involved in an RecBC-independent recombinational process of DNA repair. It may act with RecF and RecO. This chain is Recombination protein RecR, found in Clavibacter michiganensis subsp. michiganensis (strain NCPPB 382).